A 177-amino-acid polypeptide reads, in one-letter code: MAIDLQQDYFSLFGMPRRFRIDESALEAAWHGLQGEVHPDRFAHLPDVEKRRSMQWATRVNEGFRVLRKPLSRAQYLLELAGVDAAIDTNTAMSPEFLMEQMEWREAVEEARAAGEVDELEQLHLRLRQHSREVHAGLADALDDAGDYPAAAETVRRLMFIEKLQHEIDDALEALEN.

Positions 8–80 (DYFSLFGMPR…LSRAQYLLEL (73 aa)) constitute a J domain.

It belongs to the HscB family. Interacts with HscA and stimulates its ATPase activity.

In terms of biological role, co-chaperone involved in the maturation of iron-sulfur cluster-containing proteins. Seems to help targeting proteins to be folded toward HscA. The polypeptide is Co-chaperone protein HscB homolog (Azoarcus sp. (strain BH72)).